Reading from the N-terminus, the 131-residue chain is Glutaredoxin arsenate reductase (131 aa).

Catalysis depends on nucleophile residues C8 and C80. Disulfide bonds link C8–C80 and C80–C82.

It belongs to the low molecular weight phosphotyrosine protein phosphatase family. As to quaternary structure, homodimer.

The enzyme catalyses O-phospho-L-tyrosyl-[protein] + H2O = L-tyrosyl-[protein] + phosphate. It carries out the reaction [glutaredoxin]-dithiol + arsenate + glutathione + H(+) = glutathionyl-S-S-[glutaredoxin] + arsenite + H2O. In terms of biological role, reduces arsenate [As(V)] to arsenite [As(III)] using glutathione and glutaredoxin as sources of reducing equivalents. GrxA is the most effective electron donor in vivo compared to other glutaredoxins. Constitutes the major arsenate reductase compared to ArsI1 and ArsI2. Also shows weak phosphatase activity toward p-nitrophenyl phosphate. This Synechocystis sp. (strain ATCC 27184 / PCC 6803 / Kazusa) protein is Glutaredoxin arsenate reductase (arsC).